Consider the following 153-residue polypeptide: Small ribosomal subunit protein uS13 (153 aa).

It belongs to the universal ribosomal protein uS13 family. Part of the 30S ribosomal subunit. Forms a loose heterodimer with protein S19. Forms two bridges to the 50S subunit in the 70S ribosome.

Functionally, located at the top of the head of the 30S subunit, it contacts several helices of the 16S rRNA. In the 70S ribosome it contacts the 23S rRNA (bridge B1a) and protein L5 of the 50S subunit (bridge B1b), connecting the 2 subunits; these bridges are implicated in subunit movement. This chain is Small ribosomal subunit protein uS13, found in Pyrobaculum calidifontis (strain DSM 21063 / JCM 11548 / VA1).